Reading from the N-terminus, the 431-residue chain is Serine hydroxymethyltransferase (431 aa).

(6S)-5,6,7,8-tetrahydrofolate contacts are provided by residues leucine 126 and glycine 130 to leucine 132. Lysine 235 carries the N6-(pyridoxal phosphate)lysine modification.

Belongs to the SHMT family. In terms of assembly, homodimer. Requires pyridoxal 5'-phosphate as cofactor.

It localises to the cytoplasm. The enzyme catalyses (6R)-5,10-methylene-5,6,7,8-tetrahydrofolate + glycine + H2O = (6S)-5,6,7,8-tetrahydrofolate + L-serine. The protein operates within one-carbon metabolism; tetrahydrofolate interconversion. It functions in the pathway amino-acid biosynthesis; glycine biosynthesis; glycine from L-serine: step 1/1. Catalyzes the reversible interconversion of serine and glycine with tetrahydrofolate (THF) serving as the one-carbon carrier. This reaction serves as the major source of one-carbon groups required for the biosynthesis of purines, thymidylate, methionine, and other important biomolecules. Also exhibits THF-independent aldolase activity toward beta-hydroxyamino acids, producing glycine and aldehydes, via a retro-aldol mechanism. This chain is Serine hydroxymethyltransferase, found in Nocardia farcinica (strain IFM 10152).